The chain runs to 565 residues: MTENNQHLKQDWTRHREGVVRAARGTQLTAKSWLTEAPLRMLMNNLDPEVAENPNELVVYGGIGRAARNWECYDKIVESLTQLNDDETLLVQSGKPVGVFKTHSNAPRVLIANSNLVPHWASWEHFNELDAKGLAMYGQMTAGSWIYIGSQGIVQGTYETFVEAGRQHYDGNLKGRWVLTAGLGGMGGAQPLAATLAGACSLNIECQQSRIDFRIKTRYVDEQAADLDDALARIAKYTAEGKAISIALCGNAAEILPEMVRRGVRPDMVTDQTSAHDPLNGYLPKGWTWDEYRARSVSEPASVVKAAKQSMAEHVEAMLAFQQAGIPTFDYGNNIRQMAKEVGVTNAFDFPGFVPAYIRPLFCRGIGPFRWAALSGDPQDIYKTDAKVKELIPDDEHLHNWLDMARERISFQGLPARICWVGLGQRARLGLAFNEMVRSGELSAPVVIGRDHLDSGSVASPNRETESMRDGSDAVSDWPLLNALLNTASGATWVSLHHGGGVGMGFSQHSGMVIVCDGTDEAAERIARVLHNDPATGVMRHADAGYDIAIDCAREQGLNLPMIGR.

NAD(+)-binding positions include 61–62, Q139, 185–187, E205, R210, 251–252, 272–276, 282–283, and Y331; these read GG, GMG, NA, QTSAH, and YL. Residue C419 is part of the active site. Positions 453–472 are disordered; sequence LDSGSVASPNRETESMRDGS. The span at 463–472 shows a compositional bias: basic and acidic residues; the sequence is RETESMRDGS. G501 is an NAD(+) binding site.

Belongs to the urocanase family. It depends on NAD(+) as a cofactor.

It localises to the cytoplasm. The catalysed reaction is 4-imidazolone-5-propanoate = trans-urocanate + H2O. It functions in the pathway amino-acid degradation; L-histidine degradation into L-glutamate; N-formimidoyl-L-glutamate from L-histidine: step 2/3. Functionally, catalyzes the conversion of urocanate to 4-imidazolone-5-propionate. The chain is Urocanate hydratase from Pseudomonas syringae pv. syringae (strain B728a).